We begin with the raw amino-acid sequence, 930 residues long: Isoleucine--tRNA ligase (930 aa).

The short motif at 57-67 is the 'HIGH' region element; it reads PYANGNIHVGH. Glu-554 is an L-isoleucyl-5'-AMP binding site. The short motif at 595-599 is the 'KMSKS' region element; the sequence is KMSKS. An ATP-binding site is contributed by Lys-598. Zn(2+) is bound by residues Cys-888, Cys-891, Cys-908, and Cys-911.

The protein belongs to the class-I aminoacyl-tRNA synthetase family. IleS type 1 subfamily. Monomer. Requires Zn(2+) as cofactor.

It is found in the cytoplasm. It catalyses the reaction tRNA(Ile) + L-isoleucine + ATP = L-isoleucyl-tRNA(Ile) + AMP + diphosphate. Functionally, catalyzes the attachment of isoleucine to tRNA(Ile). As IleRS can inadvertently accommodate and process structurally similar amino acids such as valine, to avoid such errors it has two additional distinct tRNA(Ile)-dependent editing activities. One activity is designated as 'pretransfer' editing and involves the hydrolysis of activated Val-AMP. The other activity is designated 'posttransfer' editing and involves deacylation of mischarged Val-tRNA(Ile). This is Isoleucine--tRNA ligase from Streptococcus pneumoniae (strain Hungary19A-6).